The following is a 250-amino-acid chain: Small ribosomal subunit protein uS2 (250 aa).

It belongs to the universal ribosomal protein uS2 family.

This is Small ribosomal subunit protein uS2 from Paraburkholderia xenovorans (strain LB400).